The sequence spans 298 residues: MLTKSAENKRNRKDDSMRPGQQLTLSIDHQTDFGYFLTDGEDTILLHNSEMTEDIEDRDEVEVFIYVDQQERLAATMKIPIISADEYGWVEVVDKVEDMGVFVDVGLSKDALVATEHLPPYEDVWPQKGDKLYCMLKVTNRGRMFAKPAPEDIISELFTDASEDLMNKELTGTVYRLIASGSFVITDDGIRCFIHPSERKEEPRLGSRVTGRVIQVKEDGSVNLSLLPRKQDAMSVDAECILTYMRMRNGAMPYSDKSQPDDIRERFNMSKAAFKRALGHLMKNGKVYQENGWTYEKK.

Positions 1 to 17 are enriched in basic and acidic residues; the sequence is MLTKSAENKRNRKDDSM. Positions 1–22 are disordered; that stretch reads MLTKSAENKRNRKDDSMRPGQQ. The region spanning 167-227 is the S1 motif domain; that stretch reads NKELTGTVYR…EDGSVNLSLL (61 aa).

This is an uncharacterized protein from Bacillus subtilis (strain 168).